We begin with the raw amino-acid sequence, 117 residues long: Ribosome-binding factor A (117 aa).

Belongs to the RbfA family. In terms of assembly, monomer. Binds 30S ribosomal subunits, but not 50S ribosomal subunits or 70S ribosomes.

It is found in the cytoplasm. Functionally, one of several proteins that assist in the late maturation steps of the functional core of the 30S ribosomal subunit. Associates with free 30S ribosomal subunits (but not with 30S subunits that are part of 70S ribosomes or polysomes). Required for efficient processing of 16S rRNA. May interact with the 5'-terminal helix region of 16S rRNA. In Leptospira interrogans serogroup Icterohaemorrhagiae serovar Lai (strain 56601), this protein is Ribosome-binding factor A.